A 332-amino-acid chain; its full sequence is Biotin synthase (332 aa).

One can recognise a Radical SAM core domain in the interval 52–282 (FPENEVEFCS…KAELRLCGGR (231 aa)). The [4Fe-4S] cluster site is built by cysteine 70, cysteine 74, and cysteine 77. Residues cysteine 114, cysteine 147, cysteine 207, and arginine 277 each coordinate [2Fe-2S] cluster.

This sequence belongs to the radical SAM superfamily. Biotin synthase family. In terms of assembly, homodimer. [4Fe-4S] cluster serves as cofactor. Requires [2Fe-2S] cluster as cofactor.

It carries out the reaction (4R,5S)-dethiobiotin + (sulfur carrier)-SH + 2 reduced [2Fe-2S]-[ferredoxin] + 2 S-adenosyl-L-methionine = (sulfur carrier)-H + biotin + 2 5'-deoxyadenosine + 2 L-methionine + 2 oxidized [2Fe-2S]-[ferredoxin]. Its pathway is cofactor biosynthesis; biotin biosynthesis; biotin from 7,8-diaminononanoate: step 2/2. In terms of biological role, catalyzes the conversion of dethiobiotin (DTB) to biotin by the insertion of a sulfur atom into dethiobiotin via a radical-based mechanism. In Aquifex aeolicus (strain VF5), this protein is Biotin synthase.